The chain runs to 387 residues: 3-ketoacyl-CoA thiolase (387 aa).

C91 functions as the Acyl-thioester intermediate in the catalytic mechanism. Catalysis depends on proton acceptor residues H343 and C373.

It belongs to the thiolase-like superfamily. Thiolase family. As to quaternary structure, heterotetramer of two alpha chains (FadB) and two beta chains (FadA).

The protein localises to the cytoplasm. The catalysed reaction is an acyl-CoA + acetyl-CoA = a 3-oxoacyl-CoA + CoA. Its pathway is lipid metabolism; fatty acid beta-oxidation. Its function is as follows. Catalyzes the final step of fatty acid oxidation in which acetyl-CoA is released and the CoA ester of a fatty acid two carbons shorter is formed. The protein is 3-ketoacyl-CoA thiolase of Cronobacter sakazakii (strain ATCC BAA-894) (Enterobacter sakazakii).